Consider the following 99-residue polypeptide: Aspartyl/glutamyl-tRNA(Asn/Gln) amidotransferase subunit C (99 aa).

This sequence belongs to the GatC family. Heterotrimer of A, B and C subunits.

The enzyme catalyses L-glutamyl-tRNA(Gln) + L-glutamine + ATP + H2O = L-glutaminyl-tRNA(Gln) + L-glutamate + ADP + phosphate + H(+). It catalyses the reaction L-aspartyl-tRNA(Asn) + L-glutamine + ATP + H2O = L-asparaginyl-tRNA(Asn) + L-glutamate + ADP + phosphate + 2 H(+). Allows the formation of correctly charged Asn-tRNA(Asn) or Gln-tRNA(Gln) through the transamidation of misacylated Asp-tRNA(Asn) or Glu-tRNA(Gln) in organisms which lack either or both of asparaginyl-tRNA or glutaminyl-tRNA synthetases. The reaction takes place in the presence of glutamine and ATP through an activated phospho-Asp-tRNA(Asn) or phospho-Glu-tRNA(Gln). This chain is Aspartyl/glutamyl-tRNA(Asn/Gln) amidotransferase subunit C, found in Cupriavidus taiwanensis (strain DSM 17343 / BCRC 17206 / CCUG 44338 / CIP 107171 / LMG 19424 / R1) (Ralstonia taiwanensis (strain LMG 19424)).